The sequence spans 813 residues: Ubiquitin carboxyl-terminal hydrolase 45 (813 aa).

A compositionally biased stretch (basic and acidic residues) spans 1-14; that stretch reads MRVKDPSKDLPEKG. The interval 1–27 is disordered; sequence MRVKDPSKDLPEKGKRNKRPLLPHDED. Residues 1–62 are interaction with ERCC1; sequence MRVKDPSKDL…AVAESLWSVC (62 aa). Phosphoserine occurs at positions 28 and 29. A UBP-type zinc finger spans residues 36-153; that stretch reads LTCQHVSYAV…AQIVDFLQKH (118 aa). Cysteine 38, histidine 40, cysteine 62, cysteine 65, cysteine 85, cysteine 88, cysteine 93, histidine 101, histidine 105, histidine 114, cysteine 127, and cysteine 130 together coordinate Zn(2+). In terms of domain architecture, USP spans 191 to 812; it reads KGITNLGNTC…QAYLLFYERI (622 aa). Cysteine 200 serves as the catalytic Nucleophile. Basic and acidic residues-rich tracts occupy residues 405–414 and 450–466; these read LQETDQDHNK and WPSE…KNDN. A disordered region spans residues 405 to 552; it reads LQETDQDHNK…QAKETHGGEE (148 aa). The segment covering 472 to 488 has biased composition (polar residues); the sequence is PASTLSTEASLNESLTD. Phosphoserine occurs at positions 507 and 525. The segment covering 521–533 has biased composition (basic and acidic residues); it reads SRGDSCGHAEQHP. Catalysis depends on histidine 745, which acts as the Proton acceptor.

It belongs to the peptidase C19 family. As to quaternary structure, interacts with ERCC1. The catalytically active form interacts with SPDL1. Retina.

It localises to the photoreceptor inner segment. The protein resides in the cytoplasm. The protein localises to the nucleus. The enzyme catalyses Thiol-dependent hydrolysis of ester, thioester, amide, peptide and isopeptide bonds formed by the C-terminal Gly of ubiquitin (a 76-residue protein attached to proteins as an intracellular targeting signal).. Catalyzes the deubiquitination of SPDL1. Plays a role in the repair of UV-induced DNA damage via deubiquitination of ERCC1, promoting its recruitment to DNA damage sites. May be involved in the maintenance of photoreceptor function. May play a role in normal retinal development. Plays a role in cell migration. This chain is Ubiquitin carboxyl-terminal hydrolase 45 (Usp45), found in Mus musculus (Mouse).